Here is a 363-residue protein sequence, read N- to C-terminus: Lactose transport ATP-binding protein LacK (363 aa).

The ABC transporter domain maps to 4-234; the sequence is VRLTDIRKSY…PDNMFVAGFI (231 aa). Residue 36–43 coordinates ATP; it reads GPSGCGKS.

It belongs to the ABC transporter superfamily.

It localises to the cell inner membrane. Part of the binding-protein-dependent transport system for lactose. Probably responsible for energy coupling to the transport system. In Rhizobium radiobacter (Agrobacterium tumefaciens), this protein is Lactose transport ATP-binding protein LacK (lacK).